We begin with the raw amino-acid sequence, 736 residues long: Subtilisin-like protease SBT1.9 (736 aa).

The signal sequence occupies residues 1–20 (MGMTVVIILVFSFFVAIVTA). Positions 21–101 (ETSPYIIHMD…FTKDLPVKLH (81 aa)) are cleaved as a propeptide — activation peptide. One can recognise an Inhibitor I9 domain in the interval 25–101 (YIIHMDLSAK…FTKDLPVKLH (77 aa)). Residues 103–582 (TFSPKFIGLN…AGHVSTNKVL (480 aa)) enclose the Peptidase S8 domain. An N-linked (GlcNAc...) asparagine glycan is attached at Asn-112. The Charge relay system role is filled by Asp-133. N-linked (GlcNAc...) asparagine glycosylation occurs at Asn-162. His-205 acts as the Charge relay system in catalysis. N-linked (GlcNAc...) asparagine glycans are attached at residues Asn-220, Asn-381, and Asn-453. The PA domain maps to 367–441 (VQFPVTYIES…VAFIGSKHRE (75 aa)). The Charge relay system role is filled by Ser-529. The N-linked (GlcNAc...) asparagine glycan is linked to Asn-617.

Belongs to the peptidase S8 family.

It localises to the secreted. This chain is Subtilisin-like protease SBT1.9, found in Arabidopsis thaliana (Mouse-ear cress).